The following is a 912-amino-acid chain: Phosphoenolpyruvate carboxylase (912 aa).

Active-site residues include His-138 and Lys-575.

This sequence belongs to the PEPCase type 1 family. Mg(2+) is required as a cofactor.

The enzyme catalyses oxaloacetate + phosphate = phosphoenolpyruvate + hydrogencarbonate. Its function is as follows. Forms oxaloacetate, a four-carbon dicarboxylic acid source for the tricarboxylic acid cycle. This chain is Phosphoenolpyruvate carboxylase, found in Lactobacillus acidophilus (strain ATCC 700396 / NCK56 / N2 / NCFM).